A 103-amino-acid chain; its full sequence is Putative RNA-binding protein RbpB (103 aa).

The RRM domain maps to 2–79; the sequence is SIYVGNLSYD…RDLKVNKAKP (78 aa). The span at 74–85 shows a compositional bias: basic and acidic residues; it reads VNKAKPREDRGG. The interval 74–103 is disordered; it reads VNKAKPREDRGGSRGSFGGNRSNNNFRNRY. Residues 92-103 are compositionally biased toward low complexity; that stretch reads GNRSNNNFRNRY.

This chain is Putative RNA-binding protein RbpB (rbpB), found in Nostoc sp. (strain PCC 7120 / SAG 25.82 / UTEX 2576).